Here is a 216-residue protein sequence, read N- to C-terminus: MKQDSRFPNLFILDHPLIQHKLTHMRDKDTSTRTFRELLREITLLMGYEITRNLPITTKRVETPLVEIDAPVIAGKKLAIVPVLRAGVGMSDGLLELIPSARVGHIGVYRADDHRPVEYLVRLPDLEDRIFILCDPMVATGYSAAHAIDVLKRRGVPGERIMFLALVAAPEGVQVFQDAHPDVKLYVASLDSHLDDHAYIVPGLGDAGDRLFGTKN.

Residues R85, R110, and 135–143 (DPMVATGYS) contribute to the 5-phospho-alpha-D-ribose 1-diphosphate site. Uracil contacts are provided by residues I200 and 205–207 (GDA). D206 contacts 5-phospho-alpha-D-ribose 1-diphosphate.

It belongs to the UPRTase family. Mg(2+) serves as cofactor.

The enzyme catalyses UMP + diphosphate = 5-phospho-alpha-D-ribose 1-diphosphate + uracil. The protein operates within pyrimidine metabolism; UMP biosynthesis via salvage pathway; UMP from uracil: step 1/1. Its activity is regulated as follows. Allosterically activated by GTP. In terms of biological role, catalyzes the conversion of uracil and 5-phospho-alpha-D-ribose 1-diphosphate (PRPP) to UMP and diphosphate. The sequence is that of Uracil phosphoribosyltransferase from Burkholderia thailandensis (strain ATCC 700388 / DSM 13276 / CCUG 48851 / CIP 106301 / E264).